Reading from the N-terminus, the 595-residue chain is Merlin (595 aa).

Phosphoserine is present on serine 13. An FERM domain is found at 22–311 (FTVRIVTMDA…GNHDLFMRRR (290 aa)). The residue at position 518 (serine 518) is a Phosphoserine; by PAK.

In terms of assembly, interacts with NHERF1, HGS and AGAP2. Interacts with LAYN. Interacts with SGSM3. Interacts (via FERM domain) with MPP1. Interacts with WWC1. Interacts with the CUL4A-RBX1-DDB1-VprBP/DCAF1 E3 ubiquitin-protein ligase complex. The unphosphorylated form interacts (via FERM domain) with VPRBP/DCAF1. Interacts (via FERM domain) with NOP53; the interaction is direct. Interacts with SCHIP1; the interaction is direct. In terms of processing, phosphorylation of Ser-518 inhibits nuclear localization by disrupting the intramolecular association of the FERM domain with the C-terminal tail. The dephosphorylation of Ser-518 favors the interaction with NOP53. Ubiquitinated by the CUL4A-RBX1-DDB1-DCAF1/VprBP E3 ubiquitin-protein ligase complex for ubiquitination and subsequent proteasome-dependent degradation. Widely expressed. Isoform 1 and isoform 3 are predominant. Isoform 4, isoform 5 and isoform 6 are expressed moderately. Isoform 8 is found at low frequency. Isoform 7, isoform 9 and isoform 10 are not expressed in adult tissues, with the exception of adult retina expressing isoform 10. Isoform 9 is faintly expressed in fetal brain, heart, lung, skeletal muscle and spleen. Fetal thymus expresses isoforms 1, 7, 9 and 10 at similar levels.

It is found in the cell projection. Its subcellular location is the filopodium membrane. It localises to the ruffle membrane. The protein resides in the nucleus. The protein localises to the cytoplasm. It is found in the perinuclear region. Its subcellular location is the cytoplasmic granule. It localises to the cytoskeleton. Functionally, probable regulator of the Hippo/SWH (Sav/Wts/Hpo) signaling pathway, a signaling pathway that plays a pivotal role in tumor suppression by restricting proliferation and promoting apoptosis. Along with WWC1 can synergistically induce the phosphorylation of LATS1 and LATS2 and can probably function in the regulation of the Hippo/SWH (Sav/Wts/Hpo) signaling pathway. May act as a membrane stabilizing protein. May inhibit PI3 kinase by binding to AGAP2 and impairing its stimulating activity. Suppresses cell proliferation and tumorigenesis by inhibiting the CUL4A-RBX1-DDB1-VprBP/DCAF1 E3 ubiquitin-protein ligase complex. The sequence is that of Merlin (NF2) from Homo sapiens (Human).